The following is a 139-amino-acid chain: uncharacterized protein (139 aa).

Positions 19-73 (IRLRRTMLGMSQEKLGESLGITFQQIQKYEKGTNRVGASRLQNISQILNVPVSFF) constitute an HTH cro/C1-type domain. The segment at residues 30–49 (QEKLGESLGITFQQIQKYEK) is a DNA-binding region (H-T-H motif).

This is an uncharacterized protein from Rhizobium meliloti (strain 1021) (Ensifer meliloti).